The following is a 386-amino-acid chain: Phosphoglycerate kinase (386 aa).

Residues 21 to 23, Arg-36, 59 to 62, Arg-113, and Arg-146 each bind substrate; these read DLN and HLGR. Residues Lys-197, Glu-314, and 340 to 343 contribute to the ATP site; that span reads GGDT.

Belongs to the phosphoglycerate kinase family. As to quaternary structure, monomer.

It localises to the cytoplasm. The catalysed reaction is (2R)-3-phosphoglycerate + ATP = (2R)-3-phospho-glyceroyl phosphate + ADP. Its pathway is carbohydrate degradation; glycolysis; pyruvate from D-glyceraldehyde 3-phosphate: step 2/5. In Vibrio campbellii (strain ATCC BAA-1116), this protein is Phosphoglycerate kinase.